The following is a 257-amino-acid chain: tRNA (guanine-N(7)-)-methyltransferase (257 aa).

The interval M1 to R42 is disordered. Residues E84, E109, D136, and D158 each contribute to the S-adenosyl-L-methionine site. D158 is a catalytic residue. 2 residues coordinate substrate: K162 and D194.

The protein belongs to the class I-like SAM-binding methyltransferase superfamily. TrmB family.

It carries out the reaction guanosine(46) in tRNA + S-adenosyl-L-methionine = N(7)-methylguanosine(46) in tRNA + S-adenosyl-L-homocysteine. Its pathway is tRNA modification; N(7)-methylguanine-tRNA biosynthesis. Its function is as follows. Catalyzes the formation of N(7)-methylguanine at position 46 (m7G46) in tRNA. The protein is tRNA (guanine-N(7)-)-methyltransferase of Nitrobacter winogradskyi (strain ATCC 25391 / DSM 10237 / CIP 104748 / NCIMB 11846 / Nb-255).